The primary structure comprises 350 residues: GDSL esterase/lipase At2g04570 (350 aa).

The first 23 residues, Met-1–Ala-23, serve as a signal peptide directing secretion. Ser-35 acts as the Nucleophile in catalysis. N-linked (GlcNAc...) asparagine glycans are attached at residues Asn-98 and Asn-117. Catalysis depends on residues Asp-325 and His-328. Residue Asn-343 is glycosylated (N-linked (GlcNAc...) asparagine).

Belongs to the 'GDSL' lipolytic enzyme family.

It is found in the secreted. The chain is GDSL esterase/lipase At2g04570 from Arabidopsis thaliana (Mouse-ear cress).